We begin with the raw amino-acid sequence, 165 residues long: Large ribosomal subunit protein uL11A (165 aa).

Residue Pro2 is modified to N,N-dimethylproline; by NTM1. Residues Lys4 and Lys11 each carry the N6,N6,N6-trimethyllysine; by RKM2 modification. Phosphoserine is present on residues Ser25 and Ser38. Arg67 carries the post-translational modification N5-methylarginine; by RMT2. Glycyl lysine isopeptide (Lys-Gly) (interchain with G-Cter in ubiquitin) cross-links involve residues Lys130 and Lys146.

It belongs to the universal ribosomal protein uL11 family. As to quaternary structure, component of the large ribosomal subunit (LSU). Mature yeast ribosomes consist of a small (40S) and a large (60S) subunit. The 40S small subunit contains 1 molecule of ribosomal RNA (18S rRNA) and 33 different proteins (encoded by 57 genes). The large 60S subunit contains 3 rRNA molecules (25S, 5.8S and 5S rRNA) and 46 different proteins (encoded by 81 genes). It appears that the main modified species for L12 contains 6 methyl groups, 2 on Pro-2, 3 on Lys-4 and 1 on Arg-67. Although not reproduced with a second method, methylation at Lys-11 cannot be ruled out.

It localises to the cytoplasm. Functionally, component of the ribosome, a large ribonucleoprotein complex responsible for the synthesis of proteins in the cell. The small ribosomal subunit (SSU) binds messenger RNAs (mRNAs) and translates the encoded message by selecting cognate aminoacyl-transfer RNA (tRNA) molecules. The large subunit (LSU) contains the ribosomal catalytic site termed the peptidyl transferase center (PTC), which catalyzes the formation of peptide bonds, thereby polymerizing the amino acids delivered by tRNAs into a polypeptide chain. The nascent polypeptides leave the ribosome through a tunnel in the LSU and interact with protein factors that function in enzymatic processing, targeting, and the membrane insertion of nascent chains at the exit of the ribosomal tunnel. The sequence is that of Large ribosomal subunit protein uL11A from Saccharomyces cerevisiae (strain ATCC 204508 / S288c) (Baker's yeast).